The sequence spans 194 residues: Holliday junction branch migration complex subunit RuvA (194 aa).

The segment at 1 to 64 (MIGRLRGVLT…DDSAALYGFL (64 aa)) is domain I. The tract at residues 65–140 (SESERRLFRH…RAADFNNGIS (76 aa)) is domain II. The tract at residues 140–144 (STSGK) is flexible linker. The interval 145–194 (LNLDTVSEAALALQQLGYKPAEAARMARDAGTESDDVAIVIKKALQTVLR) is domain III.

The protein belongs to the RuvA family. As to quaternary structure, homotetramer. Forms an RuvA(8)-RuvB(12)-Holliday junction (HJ) complex. HJ DNA is sandwiched between 2 RuvA tetramers; dsDNA enters through RuvA and exits via RuvB. An RuvB hexamer assembles on each DNA strand where it exits the tetramer. Each RuvB hexamer is contacted by two RuvA subunits (via domain III) on 2 adjacent RuvB subunits; this complex drives branch migration. In the full resolvosome a probable DNA-RuvA(4)-RuvB(12)-RuvC(2) complex forms which resolves the HJ.

The protein resides in the cytoplasm. Functionally, the RuvA-RuvB-RuvC complex processes Holliday junction (HJ) DNA during genetic recombination and DNA repair, while the RuvA-RuvB complex plays an important role in the rescue of blocked DNA replication forks via replication fork reversal (RFR). RuvA specifically binds to HJ cruciform DNA, conferring on it an open structure. The RuvB hexamer acts as an ATP-dependent pump, pulling dsDNA into and through the RuvAB complex. HJ branch migration allows RuvC to scan DNA until it finds its consensus sequence, where it cleaves and resolves the cruciform DNA. The protein is Holliday junction branch migration complex subunit RuvA of Xylella fastidiosa (strain M23).